The sequence spans 291 residues: Glutathione S-transferase 2 (291 aa).

The region spanning 2–83 (SPVKVFGHPM…YILRKYGGTA (82 aa)) is the GST N-terminal domain. Residues 41–42 (HK), 54–55 (KM), and 67–68 (KS) each bind glutathione. In terms of domain architecture, GST C-terminal spans 93-223 (GIEELAMVDV…RVCKHMPTEF (131 aa)).

The protein belongs to the GST superfamily. Phi family.

It carries out the reaction RX + glutathione = an S-substituted glutathione + a halide anion + H(+). Functionally, conjugation of reduced glutathione to a wide number of exogenous and endogenous hydrophobic electrophiles. The sequence is that of Glutathione S-transferase 2 (GSTA2) from Triticum aestivum (Wheat).